A 140-amino-acid polypeptide reads, in one-letter code: Lymphocyte antigen 6 complex locus protein G5c (140 aa).

Residues 1 to 41 (MRFMAGPAGSQNPGPMCFHSSLQALYTVLLIVLVMMSLVFG) form the signal peptide. The 81-residue stretch at 60 to 140 (LRCYRCLLET…SQCCFLGFLQ (81 aa)) folds into the UPAR/Ly6 domain. 4 cysteine pairs are disulfide-bonded: Cys-62–Cys-89, Cys-65–Cys-74, Cys-81–Cys-107, and Cys-116–Cys-133. N-linked (GlcNAc...) asparagine glycosylation occurs at Asn-96.

In terms of assembly, forms oligomers. N-glycosylated.

It localises to the secreted. In terms of biological role, may have a role in hematopoietic cell differentiation. The sequence is that of Lymphocyte antigen 6 complex locus protein G5c (LY6G5C) from Macaca mulatta (Rhesus macaque).